Consider the following 720-residue polypeptide: Nucleoporin 88 (720 aa).

A coiled-coil region spans residues 584–611 (LALCREDRKSLTEAAERLADKYEDAKYR).

As to expression, widely expressed. Higher levels of expression are detected in highly proliferative frontal regions of the embryo, e.g. brain, eye and anterior trunk.

It localises to the nucleus. It is found in the nuclear pore complex. Functionally, component of the nuclear pore complex. The polypeptide is Nucleoporin 88 (Danio rerio (Zebrafish)).